The following is a 30-amino-acid chain: Ampulexin 3 (30 aa).

Positions 1–17 (MKAIMVLFYVMTLTIIG) are cleaved as a signal peptide.

Monomer. As to expression, expressed in venom sac and, to a lesser extent, in venom gland. Not expressed in brain.

The protein localises to the secreted. The sequence is that of Ampulexin 3 from Ampulex compressa (Emerald cockroach wasp).